The following is a 222-amino-acid chain: Protein MKS1 (222 aa).

Positions 1 to 61 are disordered; that stretch reads MDPSEYFAGG…PNRDQPPPYI (61 aa). Residues 12–21 show a composition bias toward polar residues; the sequence is PSDQQNQKRQ. Residue S30 is modified to Phosphoserine. Basic residues predominate over residues 37–46; the sequence is DSHKIKKPPK. Over residues 47 to 61 the composition is skewed to pro residues; it reads HPAPPPNRDQPPPYI. Phosphoserine is present on S72. A VQ motif is present at residues 83–92; the sequence is FMNVVQRLTG. Positions 105–130 are disordered; the sequence is GDVSPAARLASTENASPRGGKEPAAR. 2 positions are modified to phosphoserine: S108 and S120.

Interacts with MPK4, WRKY25 and WRKY33. In terms of processing, phosphorylated on serine residue by MPK4.

Its subcellular location is the nucleus. Regulator of plant defense response. May contribute to MPK4-regulated defense activation by coupling the kinase to specific WRKY transcription factors. This is Protein MKS1 (MKS1) from Arabidopsis thaliana (Mouse-ear cress).